Consider the following 308-residue polypeptide: MSLRVTFLGTSGAVPTTRRNTSAVFLRREGDRMLFDCGEGTQRQMMRFGTGFAVSKAFITHLHGDHILGLPGLLQTMDFNDREEPLSVYVPSGKQAELRDLIDTAAGAPSFPVHVNGVSDGQVVVDADDYEIRAFETDHDARSLGYALIEASRKGRFDRERAEELGVPVGPKFQQLHAGEAVELEDGTVVEPEQVVGDPRPGRRVVYTGDTRPTDRTVTVAENADLLIHDATFATDNADRAARTAHSTAAEAADIASRADARRLALVHISSRYAGDPSPIEREADDAFGGEAFVPEDGDTVDIPFPDE.

The Zn(2+) site is built by histidine 61, histidine 63, aspartate 65, histidine 66, histidine 139, aspartate 210, and histidine 268. Catalysis depends on aspartate 65, which acts as the Proton acceptor.

Belongs to the RNase Z family. In terms of assembly, homodimer. Zn(2+) is required as a cofactor.

The enzyme catalyses Endonucleolytic cleavage of RNA, removing extra 3' nucleotides from tRNA precursor, generating 3' termini of tRNAs. A 3'-hydroxy group is left at the tRNA terminus and a 5'-phosphoryl group is left at the trailer molecule.. In terms of biological role, zinc phosphodiesterase, which displays some tRNA 3'-processing endonuclease activity. Probably involved in tRNA maturation, by removing a 3'-trailer from precursor tRNA. This is Ribonuclease Z from Natronomonas pharaonis (strain ATCC 35678 / DSM 2160 / CIP 103997 / JCM 8858 / NBRC 14720 / NCIMB 2260 / Gabara) (Halobacterium pharaonis).